The sequence spans 780 residues: Tripartite terminase subunit 1 (780 aa).

Disordered regions lie at residues 41–66 (RGNA…AGPG), 428–447 (GAGA…GDRV), and 452–483 (GARG…WGDI). Over residues 52-63 (ASGAGAAASSEA) the composition is skewed to low complexity. The segment covering 429–439 (AGAGGPKGGAG) has biased composition (gly residues). Residue 691-698 (FASVYRCG) participates in ATP binding.

It belongs to the herpesviridae TRM1 protein family. In terms of assembly, associates with TRM2 and TRM3 to form the tripartite terminase complex. Interacts with portal protein.

The protein localises to the host nucleus. Functionally, component of the molecular motor that translocates viral genomic DNA in empty capsid during DNA packaging. Forms a tripartite terminase complex together with TRM2 and TRM3 in the host cytoplasm. Once the complex reaches the host nucleus, it interacts with the capsid portal vertex. This portal forms a ring in which genomic DNA is translocated into the capsid. TRM1 carries an endonuclease activity that plays an important role for the cleavage of concatemeric viral DNA into unit length genomes. This chain is Tripartite terminase subunit 1, found in Homo sapiens (Human).